The following is a 350-amino-acid chain: Probable dTDP-glucose 4,6-dehydratase (350 aa).

Residue 7–13 (GGAGFIG) participates in NAD(+) binding. Thr-132 lines the substrate pocket. Asp-133 functions as the Proton donor in the catalytic mechanism. Residues Glu-134 and Tyr-157 each act as proton acceptor in the active site.

This sequence belongs to the NAD(P)-dependent epimerase/dehydratase family. dTDP-glucose dehydratase subfamily. Requires NAD(+) as cofactor.

The catalysed reaction is dTDP-alpha-D-glucose = dTDP-4-dehydro-6-deoxy-alpha-D-glucose + H2O. It participates in carbohydrate biosynthesis; dTDP-L-rhamnose biosynthesis. The protein is Probable dTDP-glucose 4,6-dehydratase of Sinorhizobium fredii (strain NBRC 101917 / NGR234).